Here is a 508-residue protein sequence, read N- to C-terminus: ATP synthase subunit alpha, chloroplastic (508 aa).

171–178 (GDRQTGKT) serves as a coordination point for ATP.

It belongs to the ATPase alpha/beta chains family. As to quaternary structure, F-type ATPases have 2 components, CF(1) - the catalytic core - and CF(0) - the membrane proton channel. CF(1) has five subunits: alpha(3), beta(3), gamma(1), delta(1), epsilon(1). CF(0) has four main subunits: a, b, b' and c.

The protein localises to the plastid. The protein resides in the chloroplast thylakoid membrane. The catalysed reaction is ATP + H2O + 4 H(+)(in) = ADP + phosphate + 5 H(+)(out). Produces ATP from ADP in the presence of a proton gradient across the membrane. The alpha chain is a regulatory subunit. The chain is ATP synthase subunit alpha, chloroplastic from Gnetum parvifolium (Small-leaved jointfir).